Reading from the N-terminus, the 272-residue chain is MQLRITSRKKLTSLLCALGLISIVAIYPRQTVNFFYSTAVQITDYIHFYGYRPVKSFAIRIPASYTIHGIDVSRWQERIDWQRVAKMRDNGIRLQFAFIKATEGEKLVDPYFSRNWQLSRENGLLRGAYHYFSPSVSASVQARLFLQTVDFSQGDFPAVLDVEERGKLSAKELRKRVSQWLKMVEKSTGKKPIIYSGAVFYHTNLAGYFNEYPWWVAHYYQRRPDNDGMAWRFWQHSDRGQVDGINGPVDFNVFNGTVEELQAFVDGIKETP.

Catalysis depends on residues Asp-71 and Glu-163.

Belongs to the glycosyl hydrolase 25 family.

This is an uncharacterized protein from Escherichia coli (strain K12).